The chain runs to 309 residues: Branched-chain-amino-acid aminotransferase (309 aa).

Lysine 160 is subject to N6-(pyridoxal phosphate)lysine.

The protein belongs to the class-IV pyridoxal-phosphate-dependent aminotransferase family. As to quaternary structure, homohexamer. Pyridoxal 5'-phosphate is required as a cofactor.

It catalyses the reaction L-leucine + 2-oxoglutarate = 4-methyl-2-oxopentanoate + L-glutamate. The enzyme catalyses L-isoleucine + 2-oxoglutarate = (S)-3-methyl-2-oxopentanoate + L-glutamate. The catalysed reaction is L-valine + 2-oxoglutarate = 3-methyl-2-oxobutanoate + L-glutamate. It functions in the pathway amino-acid biosynthesis; L-isoleucine biosynthesis; L-isoleucine from 2-oxobutanoate: step 4/4. Its pathway is amino-acid biosynthesis; L-leucine biosynthesis; L-leucine from 3-methyl-2-oxobutanoate: step 4/4. It participates in amino-acid biosynthesis; L-valine biosynthesis; L-valine from pyruvate: step 4/4. In terms of biological role, acts on leucine, isoleucine and valine. In Salmonella typhi, this protein is Branched-chain-amino-acid aminotransferase (ilvE).